The following is a 450-amino-acid chain: MNDTIAAVATPLGKGAISIVKISGNNALNILKQLTKKQDFTPRYAYVCDIFSNNILLDKALAIYFKAPYSFTGEDVCEIQCHGSPLLTQNILQACLNLGARLAQAGEFSKKAFLNHKMDLSEIEASIRLILCEDESVLNALARQLKGELKIFIEEARNNLLKLLASSEVLIDYSEEDIPSDFLNEVSLSLEKQIASFKDLLDFSNMQKQKNKGHALSIIGKPNAGKSSLLNAMLLEERALVSDIKGTTRDTIEEVIELQGHKVRLIDTAGIRESVDKIERLGIEKSLKSLENCDIILSVFDLSKPLEKEDFNIIDALNRTKKPCIVVLNKNDLSPKLELEVLKSHLQIPYSMLETNTLNSKACLKDLSQKISAFFPKLDTQNKLLLTSLAQKNALENAITELQNAKNHLETLELFSYHILSAIENLNLLTRPYETSQMLDSMFSEFCLGK.

K21, E78, and K117 together coordinate (6S)-5-formyl-5,6,7,8-tetrahydrofolate. In terms of domain architecture, TrmE-type G spans 213–376 (GHALSIIGKP…LSQKISAFFP (164 aa)). N223 provides a ligand contact to K(+). Residues 223–228 (NAGKSS), 242–248 (SDIKGTT), and 267–270 (DTAG) contribute to the GTP site. S227 serves as a coordination point for Mg(2+). S242, I244, and T247 together coordinate K(+). T248 provides a ligand contact to Mg(2+). K450 is a binding site for (6S)-5-formyl-5,6,7,8-tetrahydrofolate.

It belongs to the TRAFAC class TrmE-Era-EngA-EngB-Septin-like GTPase superfamily. TrmE GTPase family. Homodimer. Heterotetramer of two MnmE and two MnmG subunits. The cofactor is K(+).

It localises to the cytoplasm. Its function is as follows. Exhibits a very high intrinsic GTPase hydrolysis rate. Involved in the addition of a carboxymethylaminomethyl (cmnm) group at the wobble position (U34) of certain tRNAs, forming tRNA-cmnm(5)s(2)U34. This Helicobacter acinonychis (strain Sheeba) protein is tRNA modification GTPase MnmE.